The primary structure comprises 330 residues: MAAVDSFYLLYREIARSCSCYVEALALVGAWYTARKSIPVICDFYSLVRLHFIPRLGSRPDLIKQYGRWAVISGATDGIGKAYAEELASHGLNIILISQEEEKLQAVAKHIADTYRVETLVLVADFSRGREIYAPIREALRDRDIGILVNDVGAFYPYPQYFSQVPEDTIWDIVNVNIAAASLMVHIVLPGMVERKKGAIVTVSSGSCCKPTPQLAAFSASKAYLDHFSRALQYEYASKGIFVQSLIPFYVTSSVTAPGSFLRRCPWLAPSPRVYAQHAVSTLGISKRTTGYWSHSIQFLFAQYMPEWLWVWGANLLNRSLRKEALSSQA.

N-acetylalanine is present on Ala-2. Residues 2–82 (AAVDSFYLLY…SGATDGIGKA (81 aa)) form a required for mitochondria translocation region. NADP(+)-binding positions include 74–80 (GATDGIG), Asp-125, and Lys-222.

This sequence belongs to the short-chain dehydrogenases/reductases (SDR) family. 17-beta-HSD 3 subfamily. As to quaternary structure, interacts with STYXL1.

Its subcellular location is the mitochondrion. The protein is Inactive hydroxysteroid dehydrogenase-like protein 1 (Hsdl1) of Rattus norvegicus (Rat).